A 299-amino-acid polypeptide reads, in one-letter code: UDP-N-acetylenolpyruvoylglucosamine reductase (299 aa).

An FAD-binding PCMH-type domain is found at 31 to 192 (VGGVAEVVFK…VDATFVGACG (162 aa)). Arginine 172 is a catalytic residue. Serine 221 acts as the Proton donor in catalysis. Residue glutamate 291 is part of the active site.

It belongs to the MurB family. FAD is required as a cofactor.

It is found in the cytoplasm. It catalyses the reaction UDP-N-acetyl-alpha-D-muramate + NADP(+) = UDP-N-acetyl-3-O-(1-carboxyvinyl)-alpha-D-glucosamine + NADPH + H(+). It functions in the pathway cell wall biogenesis; peptidoglycan biosynthesis. Cell wall formation. The protein is UDP-N-acetylenolpyruvoylglucosamine reductase of Anaplasma marginale (strain St. Maries).